A 429-amino-acid polypeptide reads, in one-letter code: Adenylosuccinate synthetase (429 aa).

GTP-binding positions include 12 to 18 (GDEGKGK) and 40 to 42 (GHT). Asp13 serves as the catalytic Proton acceptor. The Mg(2+) site is built by Asp13 and Gly40. IMP contacts are provided by residues 13-16 (DEGK), 38-41 (NAGH), Thr129, Arg143, Gln223, Thr238, and Arg302. The active-site Proton donor is the His41. Position 298 to 304 (298 to 304 (TVTGRAR)) interacts with substrate. GTP is bound by residues Arg304, 330–332 (KLD), and 412–414 (STS).

This sequence belongs to the adenylosuccinate synthetase family. In terms of assembly, homodimer. Requires Mg(2+) as cofactor.

The protein resides in the cytoplasm. It carries out the reaction IMP + L-aspartate + GTP = N(6)-(1,2-dicarboxyethyl)-AMP + GDP + phosphate + 2 H(+). The protein operates within purine metabolism; AMP biosynthesis via de novo pathway; AMP from IMP: step 1/2. Its function is as follows. Plays an important role in the de novo pathway of purine nucleotide biosynthesis. Catalyzes the first committed step in the biosynthesis of AMP from IMP. The sequence is that of Adenylosuccinate synthetase from Acidiphilium cryptum (strain JF-5).